The sequence spans 570 residues: Probable metalloreductase AIM14 (570 aa).

7 consecutive transmembrane segments (helical) span residues 21-41 (IKYGYYVLIISLVYLIGLALL), 70-90 (AIHLGILFFAVLIPFYYHYSL), 101-118 (LGRLSYALIPLNLFLTLR), 142-162 (IITVIGLLHGIFFIIKWAIDD), 177-197 (FVGFIISILVLFLLICSIGPM), 204-224 (LFYIVHNLVNVAFILLTPIHS), and 230-250 (FPFLLLNCTLLFIHIINRIVF). Positions 101–219 (LGRLSYALIP…NLVNVAFILL (119 aa)) constitute a Ferric oxidoreductase domain. The FAD-binding FR-type domain occupies 250 to 388 (FAKSLMILNK…GGSGISFALP (139 aa)). Positions 480 to 507 (ISNFNSENADSNDKTPETSHSPTKENGS) are disordered.

The protein belongs to the ferric reductase (FRE) family. AIM14 subfamily. Interacts with ribosomes.

It localises to the membrane. Functionally, probable cell surface metalloreductase. May be involved in iron or copper homeostasis. This is Probable metalloreductase AIM14 (AIM14) from Saccharomyces cerevisiae (strain JAY291) (Baker's yeast).